The primary structure comprises 225 residues: Ribose-5-phosphate isomerase A (225 aa).

Residues 33 to 36, 84 to 87, and 96 to 99 each bind substrate; these read TGST, DGAD, and KGGG. Residue Glu105 is the Proton acceptor of the active site. Residue Lys123 coordinates substrate.

This sequence belongs to the ribose 5-phosphate isomerase family. Homodimer.

It carries out the reaction aldehydo-D-ribose 5-phosphate = D-ribulose 5-phosphate. It participates in carbohydrate degradation; pentose phosphate pathway; D-ribose 5-phosphate from D-ribulose 5-phosphate (non-oxidative stage): step 1/1. Its function is as follows. Catalyzes the reversible conversion of ribose-5-phosphate to ribulose 5-phosphate. This chain is Ribose-5-phosphate isomerase A, found in Halobacterium salinarum (strain ATCC 29341 / DSM 671 / R1).